We begin with the raw amino-acid sequence, 174 residues long: Shikimate kinase (174 aa).

Glycine 14 to threonine 19 contributes to the ATP binding site. Serine 18 contributes to the Mg(2+) binding site. The substrate site is built by aspartate 36, arginine 60, and glycine 82. ATP is bound at residue arginine 120. Arginine 141 contacts substrate. Arginine 158 serves as a coordination point for ATP.

Belongs to the shikimate kinase family. In terms of assembly, monomer. Mg(2+) is required as a cofactor.

Its subcellular location is the cytoplasm. The enzyme catalyses shikimate + ATP = 3-phosphoshikimate + ADP + H(+). It participates in metabolic intermediate biosynthesis; chorismate biosynthesis; chorismate from D-erythrose 4-phosphate and phosphoenolpyruvate: step 5/7. Its function is as follows. Catalyzes the specific phosphorylation of the 3-hydroxyl group of shikimic acid using ATP as a cosubstrate. The sequence is that of Shikimate kinase from Buchnera aphidicola subsp. Baizongia pistaciae (strain Bp).